A 250-amino-acid polypeptide reads, in one-letter code: Ribonuclease PH (250 aa).

Phosphate contacts are provided by residues Arg-99 and 137 to 139 (GTR).

The protein belongs to the RNase PH family. In terms of assembly, homohexameric ring arranged as a trimer of dimers.

The enzyme catalyses tRNA(n+1) + phosphate = tRNA(n) + a ribonucleoside 5'-diphosphate. Phosphorolytic 3'-5' exoribonuclease that plays an important role in tRNA 3'-end maturation. Removes nucleotide residues following the 3'-CCA terminus of tRNAs; can also add nucleotides to the ends of RNA molecules by using nucleoside diphosphates as substrates, but this may not be physiologically important. Probably plays a role in initiation of 16S rRNA degradation (leading to ribosome degradation) during starvation. In Bordetella parapertussis (strain 12822 / ATCC BAA-587 / NCTC 13253), this protein is Ribonuclease PH.